The primary structure comprises 301 residues: NTE family protein RssA (301 aa).

Residues 8-168 (LALGSGAARG…VNPIPISLTR (161 aa)) enclose the PNPLA domain. The GXSXG motif lies at 39-43 (GCSIG). The active-site Nucleophile is the S41. Catalysis depends on D155, which acts as the Proton acceptor. Residues 155-157 (DGA) carry the DGA/G motif.

The protein belongs to the NTE family.

The polypeptide is NTE family protein RssA (rssA) (Escherichia coli (strain K12)).